The primary structure comprises 42 residues: Iota-conotoxin-like R11.1 (42 aa).

4 disulfides stabilise this stretch: C5–C19, C12–C22, C18–C27, and C21–C36.

Belongs to the conotoxin I1 superfamily. In terms of tissue distribution, expressed by the venom duct.

The protein resides in the secreted. In terms of biological role, iota-conotoxins bind to voltage-gated sodium channels (Nav) and act as agonists by shifting the voltage-dependence of activation to more hyperpolarized levels. Produces general excitatory symptoms. This chain is Iota-conotoxin-like R11.1, found in Conus radiatus (Rayed cone).